The primary structure comprises 289 residues: BTB/POZ domain-containing protein KCTD7 (289 aa).

Residues Met-1 to His-40 form a disordered region. Residues Val-53–Leu-141 form the BTB domain.

In terms of assembly, interacts with CUL3.

It is found in the cell membrane. It localises to the cytoplasm. Its subcellular location is the cytosol. Functionally, may be involved in the control of excitability of cortical neurons. The polypeptide is BTB/POZ domain-containing protein KCTD7 (KCTD7) (Bos taurus (Bovine)).